The primary structure comprises 101 residues: Small ribosomal subunit protein uS14 (101 aa).

This sequence belongs to the universal ribosomal protein uS14 family. Part of the 30S ribosomal subunit. Contacts proteins S3 and S10.

Binds 16S rRNA, required for the assembly of 30S particles and may also be responsible for determining the conformation of the 16S rRNA at the A site. The sequence is that of Small ribosomal subunit protein uS14 from Aeromonas salmonicida (strain A449).